A 457-amino-acid chain; its full sequence is Toxin and drug export protein A (457 aa).

The signal sequence occupies residues 1 to 23 (MFTIKKLTLTIVVATTLTGCANI).

It belongs to the outer membrane factor (OMF) (TC 1.B.17) family. As to quaternary structure, homotrimer. Probably part of a complex composed of LtxB, LtxD and TdeA, which forms a single transport channel across the two membranes.

The protein localises to the cell outer membrane. Functionally, required for secretion of the LtxA leukotoxin and resistance to various antimicrobial compounds. In Aggregatibacter actinomycetemcomitans (Actinobacillus actinomycetemcomitans), this protein is Toxin and drug export protein A.